A 194-amino-acid chain; its full sequence is Methylthioribulose-1-phosphate dehydratase (194 aa).

His84 and His86 together coordinate Zn(2+).

It belongs to the aldolase class II family. MtnB subfamily. Zn(2+) serves as cofactor.

The catalysed reaction is 5-(methylsulfanyl)-D-ribulose 1-phosphate = 5-methylsulfanyl-2,3-dioxopentyl phosphate + H2O. It functions in the pathway amino-acid biosynthesis; L-methionine biosynthesis via salvage pathway; L-methionine from S-methyl-5-thio-alpha-D-ribose 1-phosphate: step 2/6. Its function is as follows. Catalyzes the dehydration of methylthioribulose-1-phosphate (MTRu-1-P) into 2,3-diketo-5-methylthiopentyl-1-phosphate (DK-MTP-1-P). This is Methylthioribulose-1-phosphate dehydratase from Cronobacter sakazakii (Enterobacter sakazakii).